The primary structure comprises 427 residues: Serine--tRNA ligase (427 aa).

235–237 is a binding site for L-serine; sequence TSE. 266-268 is an ATP binding site; that stretch reads RSE. Glutamate 289 is an L-serine binding site. Position 353 to 356 (353 to 356) interacts with ATP; that stretch reads EISS. Serine 388 is a binding site for L-serine.

The protein belongs to the class-II aminoacyl-tRNA synthetase family. Type-1 seryl-tRNA synthetase subfamily. As to quaternary structure, homodimer. The tRNA molecule binds across the dimer.

It is found in the cytoplasm. The catalysed reaction is tRNA(Ser) + L-serine + ATP = L-seryl-tRNA(Ser) + AMP + diphosphate + H(+). It catalyses the reaction tRNA(Sec) + L-serine + ATP = L-seryl-tRNA(Sec) + AMP + diphosphate + H(+). It functions in the pathway aminoacyl-tRNA biosynthesis; selenocysteinyl-tRNA(Sec) biosynthesis; L-seryl-tRNA(Sec) from L-serine and tRNA(Sec): step 1/1. Catalyzes the attachment of serine to tRNA(Ser). Is also able to aminoacylate tRNA(Sec) with serine, to form the misacylated tRNA L-seryl-tRNA(Sec), which will be further converted into selenocysteinyl-tRNA(Sec). In Chromobacterium violaceum (strain ATCC 12472 / DSM 30191 / JCM 1249 / CCUG 213 / NBRC 12614 / NCIMB 9131 / NCTC 9757 / MK), this protein is Serine--tRNA ligase.